The following is an 854-amino-acid chain: Zinc finger protein 341 (854 aa).

The C2H2-type 1; atypical zinc-finger motif lies at 53–76; it reads FLCGKCKKQFNSLPAFMTHKREQC. The segment at 152-217 is disordered; that stretch reads DQPMPQGPPP…GRPNPGGNGV (66 aa). Polar residues predominate over residues 163-176; the sequence is QSSLNMHSVPSYLT. Residues 177–210 show a composition bias toward pro residues; sequence QPPPPPPPPPPLPPPPPPQPPPPPPQSLGPPGRP. C2H2-type zinc fingers lie at residues 322-344 and 350-372; these read LKCS…IRSH and FQCI…MQTH. Residues 399–434 are disordered; sequence SRQEDEESTGLGQPLPGAPQPQALSTAGEEEGDKPE. Residues 408-422 are compositionally biased toward low complexity; it reads GLGQPLPGAPQPQAL. 9 C2H2-type zinc fingers span residues 445–467, 473–497, 503–525, 540–564, 566–588, 594–616, 622–644, 650–677, and 683–705; these read YLCQ…MTQH, YKCV…IKSH, YRCH…QYSH, YKCV…TATH, FPCP…LPTH, FKCQ…AHIH, YKCS…MLIH, YKCP…ILSH, and HKCA…QRAH. A disordered region spans residues 731–763; sequence CRLGPQKDKDLQTRRPPQRRAAPRSCGSGGRKV.

This sequence belongs to the krueppel C2H2-type zinc-finger protein family. In terms of assembly, binds DNA and to the STAT3 promoter.

The protein localises to the nucleus. Functionally, transcriptional activator of STAT3 involved in the regulation of immune homeostasis. Also able to activate STAT1 transcription. The chain is Zinc finger protein 341 (ZNF341) from Homo sapiens (Human).